The chain runs to 436 residues: Chorismate synthase, chloroplastic (436 aa).

A disordered region spans residues 1–24 (MASSSLTSKSILGSTKLGSSSLPS). The N-terminal 50 residues, 1–50 (MASSSLTSKSILGSTKLGSSSLPSELRRLSSPAVQISLRTQTRKNFQIQA), are a transit peptide targeting the chloroplast.

This sequence belongs to the chorismate synthase family. Homotetramer. It depends on FMNH2 as a cofactor.

Its subcellular location is the plastid. It localises to the chloroplast. The enzyme catalyses 5-O-(1-carboxyvinyl)-3-phosphoshikimate = chorismate + phosphate. Its pathway is metabolic intermediate biosynthesis; chorismate biosynthesis; chorismate from D-erythrose 4-phosphate and phosphoenolpyruvate: step 7/7. Its function is as follows. Catalyzes the last common step of the biosynthesis of aromatic amino acids, produced via the shikimic acid pathway. The chain is Chorismate synthase, chloroplastic (EMB1144) from Arabidopsis thaliana (Mouse-ear cress).